Here is a 217-residue protein sequence, read N- to C-terminus: Adenylate kinase (217 aa).

ATP is bound at residue glycine 11 to threonine 16. Residues serine 31–valine 61 form an NMP region. AMP is bound by residues threonine 32, arginine 37, aspartate 59–valine 61, glycine 87–arginine 90, and glutamine 94. Residues glycine 124–aspartate 161 are LID. ATP contacts are provided by residues arginine 125 and threonine 134–tyrosine 135. Positions 158 and 169 each coordinate AMP. An ATP-binding site is contributed by arginine 202.

This sequence belongs to the adenylate kinase family. In terms of assembly, monomer.

The protein localises to the cytoplasm. It catalyses the reaction AMP + ATP = 2 ADP. It participates in purine metabolism; AMP biosynthesis via salvage pathway; AMP from ADP: step 1/1. Catalyzes the reversible transfer of the terminal phosphate group between ATP and AMP. Plays an important role in cellular energy homeostasis and in adenine nucleotide metabolism. This is Adenylate kinase from Blochmanniella pennsylvanica (strain BPEN).